The following is a 125-amino-acid chain: Holo-[acyl-carrier-protein] synthase (125 aa).

Mg(2+) is bound by residues aspartate 8 and glutamate 57.

It belongs to the P-Pant transferase superfamily. AcpS family. Mg(2+) is required as a cofactor.

It is found in the cytoplasm. It catalyses the reaction apo-[ACP] + CoA = holo-[ACP] + adenosine 3',5'-bisphosphate + H(+). Transfers the 4'-phosphopantetheine moiety from coenzyme A to a Ser of acyl-carrier-protein. This is Holo-[acyl-carrier-protein] synthase from Blochmanniella pennsylvanica (strain BPEN).